Reading from the N-terminus, the 826-residue chain is U-box domain-containing protein 4 (826 aa).

The stretch at 172 to 204 (RSNQEILIEAVALERQKEMAEQSENNAEVEFLD) forms a coiled coil. One can recognise a U-box domain in the interval 229-303 (AILADFFCPL…ANWCETNDVK (75 aa)). A disordered region spans residues 330–501 (GADVSARKVS…TRRDLSDFSP (172 aa)). A compositionally biased stretch (polar residues) spans 347–360 (ASSSETGKPSFSSR). The span at 391 to 414 (DARRGSLNDFEDRSNDSRELRTDA) shows a compositional bias: basic and acidic residues. Phosphoserine is present on serine 396. Residues 416–428 (GRSSVSSTTRGSV) are compositionally biased toward low complexity. The span at 492–501 (TRRDLSDFSP) shows a compositional bias: basic and acidic residues. ARM repeat units follow at residues 530 to 570 (NETR…LLAK), 573 to 612 (MDNRIVIGNSGAIVLLVELLYSTDSATQENAVTALLNLSI), 614 to 653 (DNNKKAIADAGAIEPLIHVLENGSSEAKENSAATLFSLSV), 655 to 694 (EENKIKIGQSGAIGPLVDLLGNGTPRGKKDAATALFNLSI), 696 to 734 (QENKAMIVQSGAVRYLIDLMDPAAGMVDKAVAVLANLAT), 736 to 775 (PEGRNAIGQEGGIPLLVEVVELGSARGKENAAAALLQLST), and 778 to 817 (GRFCNMVLQEGAVPPLVALSQSGTPRAREKAQALLSYFRN).

The enzyme catalyses S-ubiquitinyl-[E2 ubiquitin-conjugating enzyme]-L-cysteine + [acceptor protein]-L-lysine = [E2 ubiquitin-conjugating enzyme]-L-cysteine + N(6)-ubiquitinyl-[acceptor protein]-L-lysine.. The protein operates within protein modification; protein ubiquitination. In terms of biological role, functions as an E3 ubiquitin ligase. The chain is U-box domain-containing protein 4 (PUB4) from Arabidopsis thaliana (Mouse-ear cress).